Reading from the N-terminus, the 211-residue chain is Prolactin-3C1 (211 aa).

An N-terminal signal peptide occupies residues 1–29 (MQLSLTQARTWKGLLLLVSCMILWISVTP). N-linked (GlcNAc...) asparagine glycans are attached at residues Asn77 and Asn173. A disulfide bond links Cys80 and Cys187.

It belongs to the somatotropin/prolactin family. Expressed exclusively in decidual tissue.

The protein resides in the secreted. The polypeptide is Prolactin-3C1 (Prl3c1) (Rattus norvegicus (Rat)).